A 569-amino-acid polypeptide reads, in one-letter code: Beta-lactamase-like protein 4 (569 aa).

A signal peptide spans 1-19 (MKYYLYLFLLFTFANLLYS). 13 N-linked (GlcNAc...) asparagine glycosylation sites follow: N87, N172, N239, N240, N250, N299, N343, N412, N419, N436, N468, N509, and N535.

It belongs to the beta-lactamase family.

The protein localises to the secreted. The chain is Beta-lactamase-like protein 4 from Dictyostelium discoideum (Social amoeba).